Consider the following 407-residue polypeptide: Protein ATC1/LIC4 (407 aa).

The protein resides in the cytoplasm. Its subcellular location is the nucleus. Involved in cation homeostasis and in the regulation of the cation stress signaling cascades. In Eremothecium gossypii (strain ATCC 10895 / CBS 109.51 / FGSC 9923 / NRRL Y-1056) (Yeast), this protein is Protein ATC1/LIC4 (ATC1).